A 162-amino-acid polypeptide reads, in one-letter code: UPF0305 protein MmarC5_0909 (162 aa).

The protein belongs to the UPF0305 family.

This Methanococcus maripaludis (strain C5 / ATCC BAA-1333) protein is UPF0305 protein MmarC5_0909.